Consider the following 168-residue polypeptide: Protein B-Myc (168 aa).

Disordered regions lie at residues 26 to 94 (DDEE…DLPE) and 146 to 168 (EGAS…TCNT). Phosphoserine is present on residues serine 59 and serine 67.

It is found in the nucleus. Seems to act as an inhibitor of cellular proliferation. The sequence is that of Protein B-Myc (Mycb) from Rattus norvegicus (Rat).